The sequence spans 354 residues: MSLFLRKRCLCLGFLLFHLLSQVSASLRCPSRCPPKCPSISPTCAPGVRSVLDGCSCCPVCARQRGESCSEMRPCDQSSGLYCDRSADPNNQTGICMVPEGDNCVFDGVIYRNGEKFEPNCQYFCTCRDGQIGCLPRCQLDVLLPGPDCPAPRKVAVPGECCEKWTCGSDEQGTQGTLGGLALPAYRPEATVGVEVSDSSINCIEQTTEWSACSKSCGMGVSTRVTNRNRQCEMVKQTRLCIVRPCEQEPEEVTDKKGKKCLRTKKSLKAIHLQFENCTSLYTYKPRFCGVCSDGRCCTPHNTKTIQVEFQCLPGEIIKKPVMVIGTCTCYSNCPQNNEAFLQDLELKTSRGEI.

The N-terminal stretch at methionine 1–serine 21 is a signal peptide. One can recognise an IGFBP N-terminal domain in the interval alanine 25–proline 99. 6 disulfides stabilise this stretch: cysteine 29–cysteine 55, cysteine 33–cysteine 57, cysteine 37–cysteine 58, cysteine 44–cysteine 61, cysteine 69–cysteine 83, and cysteine 75–cysteine 96. The N-linked (GlcNAc...) asparagine glycan is linked to asparagine 91. Positions aspartate 102 to glycine 168 constitute a VWFC domain. One can recognise a TSP type-1 domain in the interval asparagine 202–glutamate 247. A lipid anchor (S-palmitoyl cysteine) is attached at cysteine 241. Disulfide bonds link cysteine 261/cysteine 298, cysteine 278/cysteine 312, cysteine 289/cysteine 328, cysteine 292/cysteine 330, and cysteine 297/cysteine 334. One can recognise a CTCK domain in the interval cysteine 261–proline 335. N-linked (GlcNAc...) asparagine glycosylation occurs at asparagine 277.

This sequence belongs to the CCN family. As to quaternary structure, interacts with FBLN1. Interacts (via CTCK domain) with NOTCH1 (via the EGF-like repeat region). Interacts with GJA1/CX43. Interacts with ITGA5:ITGB1, ITGAV:ITGB3 and ITGAV:ITGB5. Interacts with ZDHHC22; the interaction may lead to CCN3 palmitoylation. May be palmitoylated on Cys-241, which is important for extracellular secretion. In terms of tissue distribution, expressed in large vessels including the ascending aorta, carotid arteries, and the thoracic aorta, in medium-sized vessels such as coronary arteries and small pulmonary veins and also in small vessels. In addition, also found to be present in the heart (at protein level). Expressed in astrocytes (at protein level). Detected in brain, bone, lung and muscle tissues. Expressed in skin, expression highly increases 5 days post-wounding, peaking on the 7th day to decline after 9 days. Expressed in pancreatic ducts and beta-cell islets. Expressed in the brain, in arcuate nucleus ESR1/KISS1 neurons, during lactation (at protein level).

The protein resides in the secreted. It is found in the cytoplasm. It localises to the cell junction. Its subcellular location is the gap junction. Immediate-early protein playing a role in various cellular processes including proliferation, adhesion, migration, differentiation and survival. Acts by binding to integrins or membrane receptors such as NOTCH1. Essential regulator of hematopoietic stem and progenitor cell function. Inhibits myogenic differentiation through the activation of Notch-signaling pathway. Inhibits vascular smooth muscle cells proliferation by increasing expression of cell-cycle regulators such as CDKN2B or CDKN1A independently of TGFB1 signaling. Ligand of integrins ITGAV:ITGB3 and ITGA5:ITGB1, acts directly upon endothelial cells to stimulate pro-angiogenic activities and induces angiogenesis. In endothelial cells, supports cell adhesion, induces directed cell migration (chemotaxis) and promotes cell survival. Also plays a role in cutaneous wound healing acting as integrin receptor ligand. Supports skin fibroblast adhesion through ITGA5:ITGB1 and ITGA6:ITGB1 and induces fibroblast chemotaxis through ITGAV:ITGB5. Seems to enhance bFGF-induced DNA synthesis in fibroblasts. Involved in bone regeneration as a negative regulator. Enhances the articular chondrocytic phenotype, whereas it repressed the one representing endochondral ossification. Impairs pancreatic beta-cell function, inhibits beta-cell proliferation and insulin secretion. Plays a role as negative regulator of endothelial pro-inflammatory activation reducing monocyte adhesion, its anti-inflammatory effects occur secondary to the inhibition of NF-kappaB signaling pathway. Contributes to the control and coordination of inflammatory processes in atherosclerosis. Attenuates inflammatory pain through regulation of IL1B- and TNF-induced MMP9, MMP2 and CCL2 expression. Inhibits MMP9 expression through ITGB1 engagement. Brain osteoanabolic hormone. During lactation, maintains the maternal skeleton and viability of offspring. In this context, may act on osteochondral skeletal stem cells. In Mus musculus (Mouse), this protein is CCN family member 3 (Ccn3).